A 2115-amino-acid chain; its full sequence is Non-reducing polyketide synthase PFUR17_0229 (2115 aa).

An N-terminal acylcarrier protein transacylase (SAT) domain (SAT) region spans residues 8 to 246 (VLFGDQTVDP…ISLPITAAFH (239 aa)). One can recognise a Ketosynthase family 3 (KS3) domain in the interval 367 to 796 (SGDIAIVGVA…GGNTSLVLED (430 aa)). Residues Cys-539, His-674, and His-713 each act as for beta-ketoacyl synthase activity in the active site. Residues 895–1218 (IFAFTGQGAQ…SISNAYNSGA (324 aa)) form a malonyl-CoA:ACP transacylase (MAT) domain region. The interval 1279–1592 (TTCLQKVESE…KRNILQSLLS (314 aa)) is product template (PT) domain. Residues 1282-1413 (LQKVESETFT…CTVMYGDGQQ (132 aa)) form an N-terminal hotdog fold region. The PKS/mFAS DH domain occupies 1282-1588 (LQKVESETFT…FQKMKRNILQ (307 aa)). Catalysis depends on His-1315, which acts as the Proton acceptor; for dehydratase activity. The C-terminal hotdog fold stretch occupies residues 1441–1588 (VHRLLKEMIY…FQKMKRNILQ (148 aa)). Asp-1501 (proton donor; for dehydratase activity) is an active-site residue. Residues 1594-1613 (GHEETPPARPVPSKRTVQGS) form a disordered region. The Carrier 1 domain maps to 1626–1703 (KAASGGFSNI…QLRNFFLDKV (78 aa)). Ser-1663 carries the post-translational modification O-(pantetheine 4'-phosphoryl)serine. The tract at residues 1710 to 1742 (FDDEESEMSSSTAGSTPGSSTSHGNQNTTVTTP) is disordered. A compositionally biased stretch (low complexity) spans 1718-1733 (SSSTAGSTPGSSTSHG). Positions 1742 to 1819 (PAEPDVVAIL…DVQKALGVPS (78 aa)) constitute a Carrier 2 domain. O-(pantetheine 4'-phosphoryl)serine is present on Ser-1779. A thioesterase (TE) domain region spans residues 1861–2097 (LFLLPDGAGS…VVGGNHFSIM (237 aa)).

Pantetheine 4'-phosphate serves as cofactor.

It catalyses the reaction 6 malonyl-CoA + 2 acetyl-CoA + 5 H(+) = o-orsellinate depside + 6 CO2 + 8 CoA + H2O. Its function is as follows. Non-reducing polyketide synthase; part of a gene cluster that mediates the biosynthesis of a yet unidentified depside/depsidone compound. The first step in the pathway is performed by the PKS PFUR17_0229 that condenses 2 acetyl-CoA starter units with 6 malonyl-CoA units to produce lecanoric acid (LA), also known as orsellinate depside. The biosynthesis occurs via the formation of 2 orsellinate intermediates fused together by the C-terminal thioesterase (TE) domain that finally releases lecanoric acid. In addition to the PKS gene, the PFUR17 gene cluster contains closely linked genes encoding a cytochrome P-450 and a laccase (phenol oxidase), directly upstream and downstream respectively, so it is likely that lecanoric acid is an intermediate in a longer biosynthetic pathway. This Pseudevernia furfuracea (Tree moss) protein is Non-reducing polyketide synthase PFUR17_0229.